A 155-amino-acid polypeptide reads, in one-letter code: SsrA-binding protein (155 aa).

It belongs to the SmpB family.

It localises to the cytoplasm. Required for rescue of stalled ribosomes mediated by trans-translation. Binds to transfer-messenger RNA (tmRNA), required for stable association of tmRNA with ribosomes. tmRNA and SmpB together mimic tRNA shape, replacing the anticodon stem-loop with SmpB. tmRNA is encoded by the ssrA gene; the 2 termini fold to resemble tRNA(Ala) and it encodes a 'tag peptide', a short internal open reading frame. During trans-translation Ala-aminoacylated tmRNA acts like a tRNA, entering the A-site of stalled ribosomes, displacing the stalled mRNA. The ribosome then switches to translate the ORF on the tmRNA; the nascent peptide is terminated with the 'tag peptide' encoded by the tmRNA and targeted for degradation. The ribosome is freed to recommence translation, which seems to be the essential function of trans-translation. In Streptococcus equi subsp. equi (strain 4047), this protein is SsrA-binding protein.